Here is a 513-residue protein sequence, read N- to C-terminus: ATP synthase subunit alpha (513 aa).

An ATP-binding site is contributed by 170–177; sequence GDRQTGKT.

The protein belongs to the ATPase alpha/beta chains family. In terms of assembly, F-type ATPases have 2 components, CF(1) - the catalytic core - and CF(0) - the membrane proton channel. CF(1) has five subunits: alpha(3), beta(3), gamma(1), delta(1), epsilon(1). CF(0) has three main subunits: a(1), b(2) and c(9-12). The alpha and beta chains form an alternating ring which encloses part of the gamma chain. CF(1) is attached to CF(0) by a central stalk formed by the gamma and epsilon chains, while a peripheral stalk is formed by the delta and b chains.

It is found in the cell inner membrane. It catalyses the reaction ATP + H2O + 4 H(+)(in) = ADP + phosphate + 5 H(+)(out). Produces ATP from ADP in the presence of a proton gradient across the membrane. The alpha chain is a regulatory subunit. The protein is ATP synthase subunit alpha of Teredinibacter turnerae (strain ATCC 39867 / T7901).